We begin with the raw amino-acid sequence, 253 residues long: 2-dehydro-3-deoxy-D-gluconate 5-dehydrogenase (253 aa).

14–38 (VVTGCDTGLGQGMALGLAQAGCDIV) contributes to the NAD(+) binding site. Ser145 provides a ligand contact to substrate. Tyr158 serves as the catalytic Proton acceptor.

It belongs to the short-chain dehydrogenases/reductases (SDR) family. As to quaternary structure, homotetramer.

The catalysed reaction is 2-dehydro-3-deoxy-D-gluconate + NAD(+) = 3-deoxy-D-glycero-2,5-hexodiulosonate + NADH + H(+). The enzyme catalyses 4-pregnen-20,21-diol-3-one + NAD(+) = 21-hydroxyprogesterone + NADH + H(+). Its function is as follows. Catalyzes the reversible reduction of 2,5-diketo-3-deoxygluconate (DKII or 4,6-dihydroxy-2,5-dioxohexanoate) into 2-keto-3-deoxygluconate (KDG or 2-dehydro-3-deoxygluconate) with a concomitant oxidation of NADH. To a lesser extent, can also reduce 5-keto-D-gluconate and oxidize D-gluconate and 1,2-propanediol. Together with KduI, seems to play a role in the catabolism of hexuronates under osmotic stress conditions, substituting for the regular hexuronate degrading enzymes UxaABC and UxuAB whose expression is repressed in these conditions. In vitro, also exhibits NADH-dependent 20-ketosteroid reductase activity against eukaryotic steroid hormone 11-deoxycorticosterone (11-DOC), which is converted into the product 4-pregnen-20,21-diol-3-one. In addition to 11-DOC, five other C21 steroid compounds (11-deoxycortisol, cortisol, corticosterone, cortisone, and 21-hydroxypregnenolone) are reduced by KduD, but steroids lacking the hydroxyl group at C21 position, such as pregnenolone, testosterone propionate, cortisone acetate, or progesterone, cannot be used as substrate. In Escherichia coli (strain K12), this protein is 2-dehydro-3-deoxy-D-gluconate 5-dehydrogenase.